Here is a 1036-residue protein sequence, read N- to C-terminus: uncharacterized protein (1036 aa).

This is an uncharacterized protein from Schizosaccharomyces pombe (strain 972 / ATCC 24843) (Fission yeast).